We begin with the raw amino-acid sequence, 129 residues long: M-zodatoxin-Lt8j (129 aa).

The first 20 residues, 1-20 (MKYFVVALALVAAFACIAES), serve as a signal peptide directing secretion. Residues 21 to 60 (KPAESEHELAEVEEENELADLEDAVWLEHLADLSDLEEAR) constitute a propeptide that is removed on maturation.

This sequence belongs to the cationic peptide 06 (cytoinsectotoxin) family. In terms of tissue distribution, expressed by the venom gland.

It is found in the secreted. Insecticidal, cytolytic and antimicrobial peptide. Forms voltage-dependent, ion-permeable channels in membranes. At high concentration causes cell membrane lysis. In Lachesana tarabaevi (Spider), this protein is M-zodatoxin-Lt8j (cit 1-9).